Here is a 284-residue protein sequence, read N- to C-terminus: L-ribulose-5-phosphate 3-epimerase UlaE (284 aa).

The protein belongs to the L-ribulose-5-phosphate 3-epimerase family.

The enzyme catalyses L-ribulose 5-phosphate = L-xylulose 5-phosphate. It participates in cofactor degradation; L-ascorbate degradation; D-xylulose 5-phosphate from L-ascorbate: step 3/4. In terms of biological role, catalyzes the isomerization of L-xylulose-5-phosphate to L-ribulose-5-phosphate. Is involved in the anaerobic L-ascorbate utilization. This is L-ribulose-5-phosphate 3-epimerase UlaE from Escherichia coli O45:K1 (strain S88 / ExPEC).